The primary structure comprises 218 residues: MNQSSLLAEFGDPITRVENALQALREGRGVLLLDDEDRENEGDIIYAVESLTTAQMALMIRECSGIVCLCLTEAQADRLALPPMVVNNNSANQTAFTVSIEAKHGVTTGVSAQDRVTTIKTAANPQAKPEDLARPGHVFPLRARAGGVLARRGHTEGTVDLMQMAGLQPAGVLCELTNPDGSMAKTPEIIEFGKLHNMPVLTIEDMVQYRIQFDLKLA.

Residues 38-39, aspartate 43, 151-155, and glutamate 175 contribute to the D-ribulose 5-phosphate site; these read RE and RRGHT. Glutamate 39 is a binding site for Mg(2+). Residue histidine 154 coordinates Mg(2+).

This sequence belongs to the DHBP synthase family. In terms of assembly, homodimer. Mg(2+) is required as a cofactor. Mn(2+) serves as cofactor.

It catalyses the reaction D-ribulose 5-phosphate = (2S)-2-hydroxy-3-oxobutyl phosphate + formate + H(+). The protein operates within cofactor biosynthesis; riboflavin biosynthesis; 2-hydroxy-3-oxobutyl phosphate from D-ribulose 5-phosphate: step 1/1. Functionally, catalyzes the conversion of D-ribulose 5-phosphate to formate and 3,4-dihydroxy-2-butanone 4-phosphate. The protein is 3,4-dihydroxy-2-butanone 4-phosphate synthase of Vibrio cholerae serotype O1 (strain M66-2).